The chain runs to 257 residues: UPF0246 protein VCM66_2278 (257 aa).

Belongs to the UPF0246 family.

The polypeptide is UPF0246 protein VCM66_2278 (Vibrio cholerae serotype O1 (strain M66-2)).